The following is a 474-amino-acid chain: 3-isopropylmalate dehydratase large subunit (474 aa).

[4Fe-4S] cluster is bound by residues Cys-353, Cys-414, and Cys-417.

This sequence belongs to the aconitase/IPM isomerase family. LeuC type 1 subfamily. In terms of assembly, heterodimer of LeuC and LeuD. [4Fe-4S] cluster is required as a cofactor.

The catalysed reaction is (2R,3S)-3-isopropylmalate = (2S)-2-isopropylmalate. It participates in amino-acid biosynthesis; L-leucine biosynthesis; L-leucine from 3-methyl-2-oxobutanoate: step 2/4. Functionally, catalyzes the isomerization between 2-isopropylmalate and 3-isopropylmalate, via the formation of 2-isopropylmaleate. The protein is 3-isopropylmalate dehydratase large subunit of Xylella fastidiosa (strain M12).